A 267-amino-acid polypeptide reads, in one-letter code: tRNA pseudouridine synthase A (267 aa).

Asp55 (nucleophile) is an active-site residue. A substrate-binding site is contributed by Tyr109.

It belongs to the tRNA pseudouridine synthase TruA family.

The catalysed reaction is uridine(38/39/40) in tRNA = pseudouridine(38/39/40) in tRNA. Its function is as follows. Formation of pseudouridine at positions 38, 39 and 40 in the anticodon stem and loop of transfer RNAs. The polypeptide is tRNA pseudouridine synthase A (Natronomonas pharaonis (strain ATCC 35678 / DSM 2160 / CIP 103997 / JCM 8858 / NBRC 14720 / NCIMB 2260 / Gabara) (Halobacterium pharaonis)).